The following is a 32-amino-acid chain: Enolase (32 aa).

The protein belongs to the enolase family. Homodimer. It depends on Mg(2+) as a cofactor.

The protein localises to the cytoplasm. It carries out the reaction (2R)-2-phosphoglycerate = phosphoenolpyruvate + H2O. It participates in carbohydrate degradation; glycolysis; pyruvate from D-glyceraldehyde 3-phosphate: step 4/5. This chain is Enolase, found in Imperata cylindrica (Cogon grass).